Reading from the N-terminus, the 568-residue chain is 2-succinyl-5-enolpyruvyl-6-hydroxy-3-cyclohexene-1-carboxylate synthase (568 aa).

It belongs to the TPP enzyme family. MenD subfamily. In terms of assembly, homodimer. Mg(2+) is required as a cofactor. Mn(2+) serves as cofactor. The cofactor is thiamine diphosphate.

It carries out the reaction isochorismate + 2-oxoglutarate + H(+) = 5-enolpyruvoyl-6-hydroxy-2-succinyl-cyclohex-3-ene-1-carboxylate + CO2. Its pathway is quinol/quinone metabolism; 1,4-dihydroxy-2-naphthoate biosynthesis; 1,4-dihydroxy-2-naphthoate from chorismate: step 2/7. It functions in the pathway quinol/quinone metabolism; menaquinone biosynthesis. Its function is as follows. Catalyzes the thiamine diphosphate-dependent decarboxylation of 2-oxoglutarate and the subsequent addition of the resulting succinic semialdehyde-thiamine pyrophosphate anion to isochorismate to yield 2-succinyl-5-enolpyruvyl-6-hydroxy-3-cyclohexene-1-carboxylate (SEPHCHC). This chain is 2-succinyl-5-enolpyruvyl-6-hydroxy-3-cyclohexene-1-carboxylate synthase, found in Mannheimia succiniciproducens (strain KCTC 0769BP / MBEL55E).